The sequence spans 419 residues: L-rhamnose isomerase (419 aa).

Mn(2+)-binding residues include His-262, Asp-294, and Asp-296.

The protein belongs to the rhamnose isomerase family. Homotetramer. The cofactor is Mn(2+).

It is found in the cytoplasm. It carries out the reaction L-rhamnopyranose = L-rhamnulose. The protein operates within carbohydrate degradation; L-rhamnose degradation; glycerone phosphate from L-rhamnose: step 1/3. Functionally, catalyzes the interconversion of L-rhamnose and L-rhamnulose. The polypeptide is L-rhamnose isomerase (Escherichia fergusonii (strain ATCC 35469 / DSM 13698 / CCUG 18766 / IAM 14443 / JCM 21226 / LMG 7866 / NBRC 102419 / NCTC 12128 / CDC 0568-73)).